The primary structure comprises 484 residues: tRNA sulfurtransferase (484 aa).

The region spanning 63–167 is the THUMP domain; it reads EAFGERLACI…NEQLYLVDKR (105 aa). ATP is bound by residues 185-186, Lys-267, Gly-289, and Gln-298; that span reads LI. Cys-346 and Cys-458 form a disulfide bridge. The Rhodanese domain maps to 406–484; sequence ISADEVIIDV…GYSNVKVYRP (79 aa). The Cysteine persulfide intermediate role is filled by Cys-458.

Belongs to the ThiI family.

It is found in the cytoplasm. It catalyses the reaction [ThiI sulfur-carrier protein]-S-sulfanyl-L-cysteine + a uridine in tRNA + 2 reduced [2Fe-2S]-[ferredoxin] + ATP + H(+) = [ThiI sulfur-carrier protein]-L-cysteine + a 4-thiouridine in tRNA + 2 oxidized [2Fe-2S]-[ferredoxin] + AMP + diphosphate. The enzyme catalyses [ThiS sulfur-carrier protein]-C-terminal Gly-Gly-AMP + S-sulfanyl-L-cysteinyl-[cysteine desulfurase] + AH2 = [ThiS sulfur-carrier protein]-C-terminal-Gly-aminoethanethioate + L-cysteinyl-[cysteine desulfurase] + A + AMP + 2 H(+). The protein operates within cofactor biosynthesis; thiamine diphosphate biosynthesis. Functionally, catalyzes the ATP-dependent transfer of a sulfur to tRNA to produce 4-thiouridine in position 8 of tRNAs, which functions as a near-UV photosensor. Also catalyzes the transfer of sulfur to the sulfur carrier protein ThiS, forming ThiS-thiocarboxylate. This is a step in the synthesis of thiazole, in the thiamine biosynthesis pathway. The sulfur is donated as persulfide by IscS. This is tRNA sulfurtransferase from Shewanella piezotolerans (strain WP3 / JCM 13877).